The sequence spans 164 residues: Phosphopantetheine adenylyltransferase (164 aa).

Residue threonine 10 coordinates substrate. ATP is bound by residues threonine 10 to phenylalanine 11 and histidine 18. Lysine 44, leucine 76, and arginine 90 together coordinate substrate. ATP is bound by residues glycine 91–arginine 93, glutamate 101, and tyrosine 126–serine 132.

This sequence belongs to the bacterial CoaD family. Homohexamer. Requires Mg(2+) as cofactor.

The protein resides in the cytoplasm. It catalyses the reaction (R)-4'-phosphopantetheine + ATP + H(+) = 3'-dephospho-CoA + diphosphate. Its pathway is cofactor biosynthesis; coenzyme A biosynthesis; CoA from (R)-pantothenate: step 4/5. Functionally, reversibly transfers an adenylyl group from ATP to 4'-phosphopantetheine, yielding dephospho-CoA (dPCoA) and pyrophosphate. The sequence is that of Phosphopantetheine adenylyltransferase from Halorhodospira halophila (strain DSM 244 / SL1) (Ectothiorhodospira halophila (strain DSM 244 / SL1)).